The sequence spans 758 residues: Vitamin K-dependent gamma-carboxylase (758 aa).

Positions Met1–Met34 are disordered. Ala2 carries the N-acetylalanine modification. Topologically, residues Ala2–Asp60 are cytoplasmic. Over residues Arg12–Ala22 the composition is skewed to basic and acidic residues. The helical transmembrane segment at Pro61–Gln81 threads the bilayer. Topologically, residues Glu82–Asp113 are lumenal. Cys99 and Cys450 are joined by a disulfide. The helical transmembrane segment at Trp114–Cys134 threads the bilayer. Residues Tyr135–Arg136 lie on the Cytoplasmic side of the membrane. The chain crosses the membrane as a helical span at residues Ile137 to Trp157. Residues Asn158 to Gln292 are Lumenal-facing. Residues Leu293 to Pro313 form a helical membrane-spanning segment. The Cytoplasmic segment spans residues Glu314 to Ser363. Residues Thr364–Thr384 traverse the membrane as a helical segment. Over Gln385–Phe758 the chain is Lumenal. Residues Pro727–Phe758 form a disordered region. The span at Pro749–Phe758 shows a compositional bias: basic and acidic residues.

Monomer. May interact with CALU. Post-translationally, the N-terminus is blocked.

The protein localises to the endoplasmic reticulum membrane. It carries out the reaction 4-carboxy-L-glutamyl-[protein] + 2,3-epoxyphylloquinone + H2O + H(+) = phylloquinol + L-glutamyl-[protein] + CO2 + O2. Functionally, mediates the vitamin K-dependent carboxylation of glutamate residues to calcium-binding gamma-carboxyglutamate (Gla) residues with the concomitant conversion of the reduced hydroquinone form of vitamin K to vitamin K epoxide. Catalyzes gamma-carboxylation of various proteins, such as blood coagulation factors (F2, F7, F9 and F10), osteocalcin (BGLAP) or matrix Gla protein (MGP). The polypeptide is Vitamin K-dependent gamma-carboxylase (GGCX) (Bos taurus (Bovine)).